The following is a 164-amino-acid chain: NADH-quinone oxidoreductase subunit I 2 (164 aa).

2 consecutive 4Fe-4S ferredoxin-type domains span residues I39–A71 and E81–D110. C51, C54, C57, C61, C90, C93, C96, and C100 together coordinate [4Fe-4S] cluster.

This sequence belongs to the complex I 23 kDa subunit family. As to quaternary structure, NDH-1 is composed of 14 different subunits. Subunits NuoA, H, J, K, L, M, N constitute the membrane sector of the complex. [4Fe-4S] cluster serves as cofactor.

It localises to the cell inner membrane. It carries out the reaction a quinone + NADH + 5 H(+)(in) = a quinol + NAD(+) + 4 H(+)(out). Its function is as follows. NDH-1 shuttles electrons from NADH, via FMN and iron-sulfur (Fe-S) centers, to quinones in the respiratory chain. The immediate electron acceptor for the enzyme in this species is believed to be ubiquinone. Couples the redox reaction to proton translocation (for every two electrons transferred, four hydrogen ions are translocated across the cytoplasmic membrane), and thus conserves the redox energy in a proton gradient. The protein is NADH-quinone oxidoreductase subunit I 2 of Cereibacter sphaeroides (strain ATCC 17023 / DSM 158 / JCM 6121 / CCUG 31486 / LMG 2827 / NBRC 12203 / NCIMB 8253 / ATH 2.4.1.) (Rhodobacter sphaeroides).